A 608-amino-acid chain; its full sequence is MEEGRDDEYCSFSNSGDRDGGLSGCFFLDHVGQVLLSRNHDGLSWKCLDSSDCEGTTCLGIIICENSETEIKFSDIYAVEFVSYGLVHSPKLGLRHAKECFRERLLNTQEMYRFTVHGFQSSPKEPCLWNLAAFTFGHMDLQTCQSWMDQLNYSLIKEVERPRNLLVFVHPKSGKGNGSKVWETVSKIFIRAKVNTKVIVTERAGHAFDVMASIQNKELHTYDGIIAVGGDGFFNEILNGYLLSRLKVPLPPSPSDSFNSVQSRGSSSVPEPGDEVHETDQKEHYPLLPDSVQEVMNFRTVNGSCEGIEDPDHPFSSERPRFGLIPAGSTDAIVMCTTGARDPVTSALHIILGRKLFLDAMQVVRWKTASTSTIEPYIRYAASFAGYGFYGDVISESEKYRWMGPKRYDYVGTKIFLKHRSYEAEVMFEEAESENSKASLHTRSKTWPFRNTTRSEKILCRANCKICNSKVGWNSASTTLNPCPEKTRWCRTKGRFLSIGAAVMSNRNERAPDGLVVDAHLSDGFLHLILIKDCSRPKYLWHLTELAKRGGEPLNFEFVEYHKTRAFTFTSFGEESVWNLDGEIFEAHQLSAQVLRGLIPLFASGPEI.

Residues 160 to 367 (ERPRNLLVFV…LDAMQVVRWK (208 aa)) form the DAGKc domain. Residues 170 to 174 (HPKSG), Thr-201, and 230 to 236 (GDGFFNE) contribute to the ATP site. Substrate is bound at residue 229 to 232 (GGDG). Residue Asp-231 is the Proton donor/acceptor of the active site. The tract at residues 254-280 (PSDSFNSVQSRGSSSVPEPGDEVHETD) is disordered. Polar residues predominate over residues 255 to 269 (SDSFNSVQSRGSSSV). ATP is bound at residue Ser-329.

The cofactor is Ca(2+).

The catalysed reaction is an N-acylsphing-4-enine + ATP = an N-acylsphing-4-enine 1-phosphate + ADP + H(+). Functionally, catalyzes specifically the phosphorylation of ceramide to form ceramide 1-phosphate. Possesses high activity on ceramide analogs (C6, C8 synthetic ceramides) and lower activity on C6 and C8 dihydroceramides. Has weak activity on natural ceramides (a mixture of ceramides from bovine brain) and the synthetic substrate C2 ceramide. Has very poor activity on diacylglycerol and sphingosine. Ceramide is a critical sphingolipid metabolite that induces programmed cell death (PCD) in plants and ceramide-1-phosphate has a PCD suppressive effect. Thus, ceramide phosphorylation plays a role in the modulation of PCD and CERK activity is crucial for the maintenance of cell viability. In Arabidopsis thaliana (Mouse-ear cress), this protein is Ceramide kinase (CERK).